We begin with the raw amino-acid sequence, 319 residues long: Probable murein peptide carboxypeptidase (319 aa).

Ser116 functions as the Nucleophile in the catalytic mechanism. Residues Glu214 and His284 each act as charge relay system in the active site.

The protein belongs to the peptidase S66 family.

The protein localises to the cytoplasm. Its pathway is cell wall degradation; peptidoglycan degradation. May be involved in the degradation of peptidoglycan by catalyzing the cleavage of the terminal D-alanine residue from cytoplasmic murein peptides. In Bacillus subtilis (strain 168), this protein is Probable murein peptide carboxypeptidase (ykfA).